The following is a 732-amino-acid chain: Catalase-peroxidase (732 aa).

The segment at Met-1–Ser-21 is disordered. The signal sequence occupies residues Met-1–Ala-22. Positions Trp-97–Tyr-220 form a cross-link, tryptophyl-tyrosyl-methioninium (Trp-Tyr) (with M-246). His-98 (proton acceptor) is an active-site residue. The tryptophyl-tyrosyl-methioninium (Tyr-Met) (with W-97) cross-link spans Tyr-220–Met-246. Position 261 (His-261) interacts with heme b.

Belongs to the peroxidase family. Peroxidase/catalase subfamily. In terms of assembly, homodimer or homotetramer. Heme b serves as cofactor. Post-translationally, formation of the three residue Trp-Tyr-Met cross-link is important for the catalase, but not the peroxidase activity of the enzyme.

The catalysed reaction is H2O2 + AH2 = A + 2 H2O. The enzyme catalyses 2 H2O2 = O2 + 2 H2O. Its function is as follows. Bifunctional enzyme with both catalase and broad-spectrum peroxidase activity. The polypeptide is Catalase-peroxidase (Synechococcus sp. (strain RCC307)).